Reading from the N-terminus, the 245-residue chain is Orotidine 5'-phosphate decarboxylase (245 aa).

Residues D22, K44, 71–80 (DLKFHDIPNT), T131, R192, Q201, G221, and R222 contribute to the substrate site. K73 (proton donor) is an active-site residue.

Belongs to the OMP decarboxylase family. Type 1 subfamily. Homodimer.

The catalysed reaction is orotidine 5'-phosphate + H(+) = UMP + CO2. It participates in pyrimidine metabolism; UMP biosynthesis via de novo pathway; UMP from orotate: step 2/2. Functionally, catalyzes the decarboxylation of orotidine 5'-monophosphate (OMP) to uridine 5'-monophosphate (UMP). This is Orotidine 5'-phosphate decarboxylase from Salmonella paratyphi A (strain ATCC 9150 / SARB42).